Here is a 289-residue protein sequence, read N- to C-terminus: Diaminopimelate epimerase (289 aa).

Substrate-binding residues include asparagine 15 and asparagine 76. The active-site Proton donor is the cysteine 85. Substrate is bound by residues glycine 86–asparagine 87, asparagine 158, asparagine 191, and glutamate 209–arginine 210. Catalysis depends on cysteine 218, which acts as the Proton acceptor. Residue glycine 219–threonine 220 coordinates substrate.

Belongs to the diaminopimelate epimerase family. As to quaternary structure, homodimer.

It is found in the cytoplasm. The catalysed reaction is (2S,6S)-2,6-diaminopimelate = meso-2,6-diaminopimelate. Its pathway is amino-acid biosynthesis; L-lysine biosynthesis via DAP pathway; DL-2,6-diaminopimelate from LL-2,6-diaminopimelate: step 1/1. Its function is as follows. Catalyzes the stereoinversion of LL-2,6-diaminopimelate (L,L-DAP) to meso-diaminopimelate (meso-DAP), a precursor of L-lysine and an essential component of the bacterial peptidoglycan. The protein is Diaminopimelate epimerase of Streptomyces coelicolor (strain ATCC BAA-471 / A3(2) / M145).